The following is a 171-amino-acid chain: MKEPIEFKLSGDRAFSEREKAINQLYNRRYFGEVVNGKLFLSLIEAAYLMERGKIKVLDGGKELSFEELFELGRKKDDQFDIKYLVYKDLRDRGYIVKSALKFGSHFRVYRRGMDEHSQWLIWVVPENLRFSANDITARVRVAHGVRKNMVMAVVDEDNDVVYYKIEWVKF.

Active-site residues include Tyr110, His117, and Lys148.

The protein belongs to the tRNA-intron endonuclease family. Archaeal short subfamily. As to quaternary structure, homotetramer; although the tetramer contains four active sites, only two participate in the cleavage. Therefore, it should be considered as a dimer of dimers.

It catalyses the reaction pretRNA = a 3'-half-tRNA molecule with a 5'-OH end + a 5'-half-tRNA molecule with a 2',3'-cyclic phosphate end + an intron with a 2',3'-cyclic phosphate and a 5'-hydroxyl terminus.. Its function is as follows. Endonuclease that removes tRNA introns. Cleaves pre-tRNA at the 5'- and 3'-splice sites to release the intron. The products are an intron and two tRNA half-molecules bearing 2',3' cyclic phosphate and 5'-OH termini. Recognizes a pseudosymmetric substrate in which 2 bulged loops of 3 bases are separated by a stem of 4 bp. The polypeptide is tRNA-splicing endonuclease (Thermococcus onnurineus (strain NA1)).